The following is a 300-amino-acid chain: GTPase Era (300 aa).

An Era-type G domain is found at 7–182 (YCGFIAIVGR…LRKGVHHFPE (176 aa)). The G1 stretch occupies residues 15 to 22 (GRPNVGKS). 15 to 22 (GRPNVGKS) lines the GTP pocket. A G2 region spans residues 41–45 (QTTRH). Residues 62 to 65 (DTPG) form a G3 region. GTP-binding positions include 62–66 (DTPGL) and 124–127 (NKVD). The tract at residues 124-127 (NKVD) is G4. The segment at 154-156 (ISA) is G5. One can recognise a KH type-2 domain in the interval 206-283 (TGEELPYSVT…HLELWVKVKS (78 aa)).

Belongs to the TRAFAC class TrmE-Era-EngA-EngB-Septin-like GTPase superfamily. Era GTPase family. As to quaternary structure, monomer.

Its subcellular location is the cytoplasm. It localises to the cell inner membrane. In terms of biological role, an essential GTPase that binds both GDP and GTP, with rapid nucleotide exchange. Plays a role in 16S rRNA processing and 30S ribosomal subunit biogenesis and possibly also in cell cycle regulation and energy metabolism. This Histophilus somni (strain 129Pt) (Haemophilus somnus) protein is GTPase Era.